We begin with the raw amino-acid sequence, 399 residues long: Probable peptidoglycan glycosyltransferase FtsW (399 aa).

Topologically, residues 1 to 25 are cytoplasmic; sequence MTAAAPSKPLPRTPRVRQAYPLDYP. Residues 26–46 traverse the membrane as a helical segment; it reads LLLCALGLLAFGWVMVTSASM. Residues 47–64 lie on the Periplasmic side of the membrane; it reads SIAEACCQNPFHYSIRHA. Residues 65–85 traverse the membrane as a helical segment; it reads IALGLALMLGLMAYSVPSHWW. Residues 86–88 lie on the Cytoplasmic side of the membrane; it reads ERH. Residues 89–109 traverse the membrane as a helical segment; that stretch reads GVWLFLASALVLILVLIPGIG. Residues 110 to 117 are Periplasmic-facing; it reads RTVNGATR. Residues 118-138 traverse the membrane as a helical segment; the sequence is WIPLGPLNVQPSEFVKLFAIL. The Cytoplasmic segment spans residues 139-153; that stretch reads YVAGYLVRHADKVVN. The helical transmembrane segment at 154 to 174 threads the bilayer; that stretch reads QLSGFIRPLILIGAAALLILM. Residues 175-177 are Periplasmic-facing; sequence QPD. 2 helical membrane-spanning segments follow: residues 178–198 and 199–219; these read FGTTAVMLATVMGMLFLGGAS and LLPFIVLLAIVGAGLVTLVIF. Topologically, residues 220–281 are periplasmic; the sequence is SPYRLERVVS…PEAHTDFLPS (62 aa). The chain crosses the membrane as a helical span at residues 282-302; it reads VIGEELGLAGMLVLIAAFVFL. Residues 303-326 are Cytoplasmic-facing; that stretch reads SWRAMSIGVRAEALKRPFESYVAQ. A helical transmembrane segment spans residues 327-347; it reads GIGLWIGLQSFVNLGVNVGIL. Residues 348–353 are Periplasmic-facing; it reads PTKGLT. A helical membrane pass occupies residues 354–374; the sequence is LPFMSYGSNSLMVGCMAVAIL. Over 375 to 399 the chain is Cytoplasmic; sequence LRIDVMLRRVESEAKFKRGTPWSRA.

This sequence belongs to the SEDS family. FtsW subfamily.

Its subcellular location is the cell inner membrane. The enzyme catalyses [GlcNAc-(1-&gt;4)-Mur2Ac(oyl-L-Ala-gamma-D-Glu-L-Lys-D-Ala-D-Ala)](n)-di-trans,octa-cis-undecaprenyl diphosphate + beta-D-GlcNAc-(1-&gt;4)-Mur2Ac(oyl-L-Ala-gamma-D-Glu-L-Lys-D-Ala-D-Ala)-di-trans,octa-cis-undecaprenyl diphosphate = [GlcNAc-(1-&gt;4)-Mur2Ac(oyl-L-Ala-gamma-D-Glu-L-Lys-D-Ala-D-Ala)](n+1)-di-trans,octa-cis-undecaprenyl diphosphate + di-trans,octa-cis-undecaprenyl diphosphate + H(+). The protein operates within cell wall biogenesis; peptidoglycan biosynthesis. In terms of biological role, peptidoglycan polymerase that is essential for cell division. This is Probable peptidoglycan glycosyltransferase FtsW from Allochromatium vinosum (strain ATCC 17899 / DSM 180 / NBRC 103801 / NCIMB 10441 / D) (Chromatium vinosum).